A 309-amino-acid chain; its full sequence is Homoserine O-succinyltransferase (309 aa).

C142 functions as the Acyl-thioester intermediate in the catalytic mechanism. Substrate contacts are provided by K163 and S192. H235 acts as the Proton acceptor in catalysis. Residue E237 is part of the active site. Residue R249 coordinates substrate.

This sequence belongs to the MetA family.

The protein localises to the cytoplasm. It carries out the reaction L-homoserine + succinyl-CoA = O-succinyl-L-homoserine + CoA. It functions in the pathway amino-acid biosynthesis; L-methionine biosynthesis via de novo pathway; O-succinyl-L-homoserine from L-homoserine: step 1/1. Functionally, transfers a succinyl group from succinyl-CoA to L-homoserine, forming succinyl-L-homoserine. This is Homoserine O-succinyltransferase from Serratia proteamaculans (strain 568).